The chain runs to 327 residues: Biotin synthase (327 aa).

Residues 44–273 form the Radical SAM core domain; the sequence is FMGNKFDTCS…NAFLRFSGGR (230 aa). Cys-62, Cys-66, and Cys-69 together coordinate [4Fe-4S] cluster. [2Fe-2S] cluster contacts are provided by Cys-138, Cys-198, and Arg-268.

Belongs to the radical SAM superfamily. Biotin synthase family. In terms of assembly, homodimer. [4Fe-4S] cluster is required as a cofactor. It depends on [2Fe-2S] cluster as a cofactor.

It carries out the reaction (4R,5S)-dethiobiotin + (sulfur carrier)-SH + 2 reduced [2Fe-2S]-[ferredoxin] + 2 S-adenosyl-L-methionine = (sulfur carrier)-H + biotin + 2 5'-deoxyadenosine + 2 L-methionine + 2 oxidized [2Fe-2S]-[ferredoxin]. Its pathway is cofactor biosynthesis; biotin biosynthesis; biotin from 7,8-diaminononanoate: step 2/2. Catalyzes the conversion of dethiobiotin (DTB) to biotin by the insertion of a sulfur atom into dethiobiotin via a radical-based mechanism. The polypeptide is Biotin synthase (Parabacteroides distasonis (strain ATCC 8503 / DSM 20701 / CIP 104284 / JCM 5825 / NCTC 11152)).